A 216-amino-acid chain; its full sequence is Splicing factor U2AF 23 kDa subunit (216 aa).

Residues 12-40 (EQDKVNCSFYYKIGACRHGERCSRKHVKP) form a C3H1-type 1 zinc finger. In terms of domain architecture, RRM spans 44–141 (QTILCPNMYK…RPVYAELSPV (98 aa)). Residues 143-170 (DFREACCRQHETSECQRGGLCNFMHAKK) form a C3H1-type 2 zinc finger. The tract at residues 194-216 (EMKKEPNSDSTNRWVSVTAERKN) is disordered.

As to quaternary structure, forms a heterodimer with the U2AF large subunit. Can also form a homodimer. U2AF large subunit (U2AF59), U2AF small subunit (U2AF23) and SF1 (bpb1) interact to form a complex required for complex A formation. Interacts with cwf13.

It localises to the nucleus. Functionally, necessary for the splicing of pre-mRNA. The SF1-U2AF59-U2AF23 complex has a role in the recognition of the branch site (5'-UACUAAC-3'), the pyrimidine tract and the 3'-splice site at the 3'-end of introns. In Schizosaccharomyces pombe (strain 972 / ATCC 24843) (Fission yeast), this protein is Splicing factor U2AF 23 kDa subunit.